We begin with the raw amino-acid sequence, 814 residues long: Phenylalanine--tRNA ligase beta subunit (814 aa).

Residues 39–153 enclose the tRNA-binding domain; it reads SKNVNGVVLG…LKHELGTPVS (115 aa). A B5 domain is found at 414 to 500; it reads NEDIFIKLRR…RLIGYDRFDL (87 aa). Mg(2+)-binding residues include Asp478, Asp484, Glu487, and Glu488. One can recognise an FDX-ACB domain in the interval 720–813; sequence PIVPKIERDI…IEKSFQTKLR (94 aa).

The protein belongs to the phenylalanyl-tRNA synthetase beta subunit family. Type 1 subfamily. In terms of assembly, tetramer of two alpha and two beta subunits. Mg(2+) serves as cofactor.

The protein resides in the cytoplasm. The catalysed reaction is tRNA(Phe) + L-phenylalanine + ATP = L-phenylalanyl-tRNA(Phe) + AMP + diphosphate + H(+). The protein is Phenylalanine--tRNA ligase beta subunit of Prochlorococcus marinus (strain MIT 9312).